The chain runs to 107 residues: UPF0473 protein llmg_0152 (107 aa).

The protein belongs to the UPF0473 family.

The protein is UPF0473 protein llmg_0152 of Lactococcus lactis subsp. cremoris (strain MG1363).